The primary structure comprises 162 residues: Shikimate kinase (162 aa).

Gly-11 to Ser-16 serves as a coordination point for ATP. Ser-15 provides a ligand contact to Mg(2+). Asp-33, Arg-57, and Gly-80 together coordinate substrate. Arg-116 lines the ATP pocket. Residue Arg-132 participates in substrate binding.

Belongs to the shikimate kinase family. Monomer. It depends on Mg(2+) as a cofactor.

The protein localises to the cytoplasm. The catalysed reaction is shikimate + ATP = 3-phosphoshikimate + ADP + H(+). It participates in metabolic intermediate biosynthesis; chorismate biosynthesis; chorismate from D-erythrose 4-phosphate and phosphoenolpyruvate: step 5/7. In terms of biological role, catalyzes the specific phosphorylation of the 3-hydroxyl group of shikimic acid using ATP as a cosubstrate. The polypeptide is Shikimate kinase (Helicobacter pylori (strain HPAG1)).